A 248-amino-acid polypeptide reads, in one-letter code: Type II secretion system protein N (248 aa).

Residues 1–6 (MKLKSG) lie on the Cytoplasmic side of the membrane. A helical; Signal-anchor for type II membrane protein membrane pass occupies residues 7-27 (IVTGVALVLAYGLFLASYAPA). Topologically, residues 28-248 (RLLTAVPLPA…RTLNFQGRLL (221 aa)) are periplasmic.

The protein belongs to the GSP N family.

Its subcellular location is the cell inner membrane. Functionally, involved in a type II secretion system (T2SS, formerly general secretion pathway, GSP) for the export of proteins. Required for the translocation of the multiple pectic enzymes. This Pectobacterium carotovorum subsp. carotovorum (Erwinia carotovora subsp. carotovora) protein is Type II secretion system protein N (outN).